Consider the following 1523-residue polypeptide: MDRLCGSGELGSKFWDSNLSIYTNTPDLTPCFQNSLLAWVPCIYLWAALPCYLFYLRHHQLGYIVLSWLSRLKTALGVLLWCVSWVDLFYSFHGLIHGSSPAPVFFVTPLVVGITMLLATLLIQYERLRGVQSSGVLIIFWLLCVICAIIPFRSKILSALAEGKILDPFRFTTFYIYFALVFCALILSCFKEKPPLFSPENLDTNPCPEASAGFFSRLSFWWFTRLAILGYRRPLEDRDLWSLSEEDCSHKVVQRLLEAWQKQQNQASRSQTATAEPKIPGEDAVLLKPRPKSKQPSFLRALVRTFTSSLLMSACFNLIQNLLGFVNPQLLSILIRFISDPTAPTWWGFLLAGLMFLSSTMQTLILHQYYHCIFVMALRLRTAIIGVIYRKALVITNSVKRESTVGEMVNLMSVDAQRFMDVSPFINLLWSAPLQVILAIYFLWQILGPSALAGVAVIVLLIPLNGAVSMKMKTYQVKQMKFKDSRIKLMSEILNGIKVLKLYAWEPSFLEQVKGIRQSELQLLRKGAYLQAISTFIWICTPFLVTLITLGVYVYVDESNVLDAEKAFVSLSLFNILKIPLNMLPQLISGLTQASVSLKRIQDFLNQNELDPQCVERKTISPGYAITIHNGTFTWAQDLPPTLHSLNIQIPKGALVAVVGPVGCGKSSLVSALLGEMEKLEGVVSVKGSVAYVPQQAWIQNCTLQENVLFGQPMNPKRYQQALETCALLADLDVLPGGDQTEIGEKGINLSGGQRQRVSLARAVYSDANIFLLDDPLSAVDSHVAKHIFDQVIGPEGVLAGKTRVLVTHGISFLPQTDFIIVLAGGQVSEMGHYSALLQHDGSFANFLRNYAPDEDQEDHEAALQNANEEVLLLEDTLSTHTDLTDNEPAIYEVRKQFMREMSSLSSEGEVQNRTMPKKHTNSLEKEALVTKTKETGALIKEEIAETGNVKLSVYWDYAKSMGLCTTLSICLLYGGQSAAAIGANVWLSAWSNDAEEHGQQNKTSVRLGVYAALGILQGLLVMLSAFTMVVGAIQAARLLHEALLHNKIRSPQSFFDTTPSGRILNRFSKDIYVIDEVLAPTILMLLNSFFTSISTIMVIVASTPLFMVVVLPLAVLYGFVQRFYVATSRQLKRLESISRSPIFSHFSETVTGTSVIRAYGRIQDFKVLSDTKVDNNQKSSYPYIASNRWLGVHVEFVGNCVVLFAALFAVIGRNSLNPGLVGLSVSYALQVTMALNWMIRMISDLESNIIAVERVKEYSKTKTEAPWVVESNRAPEGWPTRGMVEFRNYSVRYRPGLELVLKNVTVHVQGGEKVGIVGRTGAGKSSMTLCLFRILEAAEGEIVIDGLNVAHIGLHDLRSQLTIIPQDPILFSGTLRMNLDPFGRYSEEDIWRALELSHLNTFVSSQPAGLDFQCAEGGDNLSVGQRQLVCLARALLRKSRVLVLDEATAAIDLETDDLIQGTIRTQFEDCTVLTIAHRLNTIMDYNRVLVLDKGVVAEFDSPVNLIAAGGIFYGMAKDAGLA.

The Extracellular portion of the chain corresponds to 1 to 35; the sequence is MDRLCGSGELGSKFWDSNLSIYTNTPDLTPCFQNS. N-linked (GlcNAc...) asparagine glycosylation occurs at N18. The chain crosses the membrane as a helical span at residues 36–56; that stretch reads LLAWVPCIYLWAALPCYLFYL. Residues 57-75 are Cytoplasmic-facing; that stretch reads RHHQLGYIVLSWLSRLKTA. Residues 76 to 96 traverse the membrane as a helical segment; that stretch reads LGVLLWCVSWVDLFYSFHGLI. Residues 97–102 are Extracellular-facing; the sequence is HGSSPA. Residues 103–123 form a helical membrane-spanning segment; the sequence is PVFFVTPLVVGITMLLATLLI. Over 124–129 the chain is Cytoplasmic; sequence QYERLR. The helical transmembrane segment at 130-150 threads the bilayer; it reads GVQSSGVLIIFWLLCVICAII. The Extracellular portion of the chain corresponds to 151–170; it reads PFRSKILSALAEGKILDPFR. The chain crosses the membrane as a helical span at residues 171 to 191; sequence FTTFYIYFALVFCALILSCFK. The Cytoplasmic portion of the chain corresponds to 192-301; that stretch reads EKPPLFSPEN…KSKQPSFLRA (110 aa). A helical membrane pass occupies residues 302 to 324; it reads LVRTFTSSLLMSACFNLIQNLLG. The ABC transmembrane type-1 1 domain occupies 310-593; sequence LLMSACFNLI…LPQLISGLTQ (284 aa). At 325 to 345 the chain is on the extracellular side; it reads FVNPQLLSILIRFISDPTAPT. A helical membrane pass occupies residues 346–366; sequence WWGFLLAGLMFLSSTMQTLIL. Topologically, residues 367–419 are cytoplasmic; sequence HQYYHCIFVMALRLRTAIIGVIYRKALVITNSVKRESTVGEMVNLMSVDAQRF. The helical transmembrane segment at 420–440 threads the bilayer; that stretch reads MDVSPFINLLWSAPLQVILAI. A topological domain (extracellular) is located at residue Y441. The chain crosses the membrane as a helical span at residues 442 to 462; that stretch reads FLWQILGPSALAGVAVIVLLI. Over 463–535 the chain is Cytoplasmic; it reads PLNGAVSMKM…KGAYLQAIST (73 aa). The helical transmembrane segment at 536 to 556 threads the bilayer; it reads FIWICTPFLVTLITLGVYVYV. Residues 557–567 are Extracellular-facing; sequence DESNVLDAEKA. The helical transmembrane segment at 568-588 threads the bilayer; that stretch reads FVSLSLFNILKIPLNMLPQLI. The Cytoplasmic portion of the chain corresponds to 589–967; sequence SGLTQASVSL…YAKSMGLCTT (379 aa). The ABC transporter 1 domain occupies 626–850; sequence ITIHNGTFTW…DGSFANFLRN (225 aa). Residue 660–667 coordinates ATP; sequence GPVGCGKS. Phosphoserine is present on residues S903 and S906. Polar residues predominate over residues 903 to 915; it reads SSLSSEGEVQNRT. The interval 903–923 is disordered; that stretch reads SSLSSEGEVQNRTMPKKHTNS. The region spanning 967–1248 is the ABC transmembrane type-1 2 domain; sequence TLSICLLYGG…MIRMISDLES (282 aa). A helical membrane pass occupies residues 968–988; sequence LSICLLYGGQSAAAIGANVWL. The Extracellular portion of the chain corresponds to 989-1013; the sequence is SAWSNDAEEHGQQNKTSVRLGVYAA. N1002 is a glycosylation site (N-linked (GlcNAc...) asparagine). Residues 1014–1034 form a helical membrane-spanning segment; that stretch reads LGILQGLLVMLSAFTMVVGAI. The Cytoplasmic segment spans residues 1035-1071; sequence QAARLLHEALLHNKIRSPQSFFDTTPSGRILNRFSKD. A helical transmembrane segment spans residues 1072–1092; that stretch reads IYVIDEVLAPTILMLLNSFFT. Over 1093-1096 the chain is Extracellular; the sequence is SIST. The chain crosses the membrane as a helical span at residues 1097–1117; it reads IMVIVASTPLFMVVVLPLAVL. The Cytoplasmic portion of the chain corresponds to 1118 to 1191; that stretch reads YGFVQRFYVA…YPYIASNRWL (74 aa). A helical transmembrane segment spans residues 1192-1212; that stretch reads GVHVEFVGNCVVLFAALFAVI. The Extracellular portion of the chain corresponds to 1213–1219; the sequence is GRNSLNP. The helical transmembrane segment at 1220–1240 threads the bilayer; it reads GLVGLSVSYALQVTMALNWMI. Topologically, residues 1241–1523 are cytoplasmic; it reads RMISDLESNI…YGMAKDAGLA (283 aa). In terms of domain architecture, ABC transporter 2 spans 1287-1519; the sequence is FRNYSVRYRP…GGIFYGMAKD (233 aa). Position 1319–1326 (1319–1326) interacts with ATP; sequence GRTGAGKS.

Belongs to the ABC transporter superfamily. ABCC family. Conjugate transporter (TC 3.A.1.208) subfamily. In terms of tissue distribution, detected throughout the gastrointestinal tract, liver, lung, pancreas, bladder, gall bladder and at low levels in the adrenal gland.

It localises to the basolateral cell membrane. It is found in the basal cell membrane. It catalyses the reaction an S-substituted glutathione(in) + ATP + H2O = an S-substituted glutathione(out) + ADP + phosphate + H(+). It carries out the reaction ATP + H2O + xenobioticSide 1 = ADP + phosphate + xenobioticSide 2.. The enzyme catalyses 17beta-estradiol 17-O-(beta-D-glucuronate)(in) + ATP + H2O = 17beta-estradiol 17-O-(beta-D-glucuronate)(out) + ADP + phosphate + H(+). The catalysed reaction is dehydroepiandrosterone 3-sulfate(in) + ATP + H2O = dehydroepiandrosterone 3-sulfate(out) + ADP + phosphate + H(+). It catalyses the reaction leukotriene C4(in) + ATP + H2O = leukotriene C4(out) + ADP + phosphate + H(+). It carries out the reaction taurocholate(in) + ATP + H2O = taurocholate(out) + ADP + phosphate + H(+). The enzyme catalyses glycocholate(in) + ATP + H2O = glycocholate(out) + ADP + phosphate + H(+). The catalysed reaction is taurolithocholate 3-sulfate(in) + ATP + H2O = taurolithocholate 3-sulfate(out) + ADP + phosphate + H(+). It catalyses the reaction taurochenodeoxycholate 3-sulfate(in) + ATP + H2O = taurochenodeoxycholate 3-sulfate(out) + ADP + phosphate + H(+). It carries out the reaction (4Z,15Z)-bilirubin IXalpha C8-beta-D-glucuronoside(in) + ATP + H2O = (4Z,15Z)-bilirubin IXalpha C8-beta-D-glucuronoside(out) + ADP + phosphate + H(+). The enzyme catalyses (4Z,15Z)-bilirubin IXalpha C8,C12-beta-D-bisglucuronoside(in) + ATP + H2O = (4Z,15Z)-bilirubin IXalpha C8,C12-beta-D-bisglucuronoside(out) + ADP + phosphate + H(+). In terms of biological role, ATP-dependent transporter of the ATP-binding cassette (ABC) family that binds and hydrolyzes ATP to enable active transport of various substrates including many drugs, toxicants and endogenous compound across cell membranes. Transports glucuronide conjugates such as bilirubin diglucuronide, estradiol-17-beta-o-glucuronide and GSH conjugates such as leukotriene C4 (LTC4). Transports also various bile salts (taurocholate, glycocholate, taurochenodeoxycholate-3-sulfate, taurolithocholate- 3-sulfate). Does not contribute substantially to bile salt physiology but provides an alternative route for the export of bile acids and glucuronides from cholestatic hepatocytes. May contribute to regulate the transport of organic compounds in testes across the blood-testis-barrier. The polypeptide is ATP-binding cassette sub-family C member 3 (Abcc3) (Mus musculus (Mouse)).